The chain runs to 882 residues: DNA mismatch repair protein MutS (882 aa).

Gly-627–Ser-634 serves as a coordination point for ATP.

It belongs to the DNA mismatch repair MutS family.

Its function is as follows. This protein is involved in the repair of mismatches in DNA. It is possible that it carries out the mismatch recognition step. This protein has a weak ATPase activity. The sequence is that of DNA mismatch repair protein MutS from Anaeromyxobacter dehalogenans (strain 2CP-C).